The sequence spans 319 residues: MAPLESPATASSSEVESSSEEIFKSSSEESKPKDPVTVPSSKTLKSPSAAVNSKTDSSDDSEKQSFVLTRRKKKEGAAESPAVKSGKKRAGEGSTSRDMHVKRVKKEDDNKKANPQRVWSEEDEISLLQAVIDFKAETGTSPWDHKNAFFDIAKKSISFDVSHVQFFDKIRRLKNKYFVNRKNKSGESNHDKKCLGLAVLIWGSDGMNVESPVKKDESILVKGKANSKEKKVEKPLVIEDEQVILGADSEWFEESFLVPVIANLGLDEYSVKKKWSKVSLETKKKIQEKMKVVDAKKCELLLAEMDVLKDVTSVLAQTN.

The disordered stretch occupies residues 1–119; that stretch reads MAPLESPATA…NKKANPQRVW (119 aa). Basic and acidic residues predominate over residues 21-34; it reads EIFKSSSEESKPKD. A compositionally biased stretch (polar residues) spans 38 to 55; that stretch reads VPSSKTLKSPSAAVNSKT. A compositionally biased stretch (basic and acidic residues) spans 89–112; sequence RAGEGSTSRDMHVKRVKKEDDNKK.

It belongs to the GeBP family. In terms of tissue distribution, expressed strongly in leaves and flowers, weakly in roots, and very weakly in stems.

Its subcellular location is the nucleus. In terms of biological role, transcription repressor that binds DNA in a sequence-specific manner, 5'-GCCT-3', to regulate the expression of PGR. Acts as a modulatory component for the glucose-triggered developmental leaf growth process. The protein is Transcription factor STKL2 of Arabidopsis thaliana (Mouse-ear cress).